The following is an 876-amino-acid chain: Alanine--tRNA ligase (876 aa).

Zn(2+) contacts are provided by H565, H569, C667, and H671.

Belongs to the class-II aminoacyl-tRNA synthetase family. Zn(2+) is required as a cofactor.

The protein resides in the cytoplasm. The enzyme catalyses tRNA(Ala) + L-alanine + ATP = L-alanyl-tRNA(Ala) + AMP + diphosphate. Catalyzes the attachment of alanine to tRNA(Ala) in a two-step reaction: alanine is first activated by ATP to form Ala-AMP and then transferred to the acceptor end of tRNA(Ala). Also edits incorrectly charged Ser-tRNA(Ala) and Gly-tRNA(Ala) via its editing domain. This Desulfosudis oleivorans (strain DSM 6200 / JCM 39069 / Hxd3) (Desulfococcus oleovorans) protein is Alanine--tRNA ligase.